A 199-amino-acid chain; its full sequence is Ion-translocating oxidoreductase complex subunit A (199 aa).

Transmembrane regions (helical) follow at residues leucine 8 to glycine 28, valine 49 to valine 69, phenylalanine 75 to isoleucine 95, serine 106 to leucine 126, valine 138 to isoleucine 158, and alanine 178 to leucine 198.

This sequence belongs to the NqrDE/RnfAE family. In terms of assembly, the Rnf complex is probably composed of eight subunits, including RnfA, RnfB, RnfC, RnfD, RnfE and RnfG.

It localises to the cell membrane. Its function is as follows. Part of a membrane-bound complex that couples electron transfer with translocation of ions across the membrane. Catalyzes Na(+) transport, most probably coupled to electron transfer from reduced ferredoxin to methanophenazine and heterodisulfide reductase. Involved in heterodisulfide reduction during methanogenesis from acetate. The polypeptide is Ion-translocating oxidoreductase complex subunit A (Methanosarcina acetivorans (strain ATCC 35395 / DSM 2834 / JCM 12185 / C2A)).